The sequence spans 323 residues: NADH-cytochrome b5 reductase 2 (323 aa).

Residues 32–48 (LAPIYVAVGLTGLGVGL) traverse the membrane as a helical segment. The region spanning 72 to 177 (QGWVDLKLAQ…KGPIPKYPWE (106 aa)) is the FAD-binding FR-type domain. Residue 180-215 (KHKHICLIAGGTGITPMYQLARKIFKDPEDQTKVTL) coordinates FAD.

It belongs to the flavoprotein pyridine nucleotide cytochrome reductase family. FAD is required as a cofactor.

The protein resides in the mitochondrion outer membrane. It carries out the reaction 2 Fe(III)-[cytochrome b5] + NADH = 2 Fe(II)-[cytochrome b5] + NAD(+) + H(+). In terms of biological role, may mediate the reduction of outer membrane cytochrome b5. The protein is NADH-cytochrome b5 reductase 2 (mcr1) of Neosartorya fischeri (strain ATCC 1020 / DSM 3700 / CBS 544.65 / FGSC A1164 / JCM 1740 / NRRL 181 / WB 181) (Aspergillus fischerianus).